The primary structure comprises 349 residues: Very-long-chain 3-oxoacyl-CoA reductase (349 aa).

The helical transmembrane segment at 29 to 49 threads the bilayer; the sequence is AASLVFATGGLFLLSRGLSFL. NADP(+)-binding residues include Leu-74, Asp-129, Asp-137, Asn-156, Tyr-223, Lys-227, Val-256, and Ser-258. The Proton donor role is filled by Tyr-223. Catalysis depends on Lys-227, which acts as the Lowers pKa of active site Tyr.

This sequence belongs to the short-chain dehydrogenases/reductases (SDR) family.

It localises to the endoplasmic reticulum membrane. The enzyme catalyses a very-long-chain (3R)-3-hydroxyacyl-CoA + NADP(+) = a very-long-chain 3-oxoacyl-CoA + NADPH + H(+). The protein operates within lipid metabolism; fatty acid biosynthesis. In terms of biological role, component of the microsomal membrane bound fatty acid elongation system, which produces the 26-carbon very long-chain fatty acids (VLCFA) from palmitate. Catalyzes the reduction of the 3-ketoacyl-CoA intermediate that is formed in each cycle of fatty acid elongation. VLCFAs serve as precursors for ceramide and sphingolipids. The polypeptide is Very-long-chain 3-oxoacyl-CoA reductase (Coccidioides immitis (strain RS) (Valley fever fungus)).